The following is a 146-amino-acid chain: D-aminoacyl-tRNA deacylase (146 aa).

The Gly-cisPro motif, important for rejection of L-amino acids signature appears at 138-139; that stretch reads GP.

Belongs to the DTD family. Homodimer.

Its subcellular location is the cytoplasm. It catalyses the reaction glycyl-tRNA(Ala) + H2O = tRNA(Ala) + glycine + H(+). The catalysed reaction is a D-aminoacyl-tRNA + H2O = a tRNA + a D-alpha-amino acid + H(+). Functionally, an aminoacyl-tRNA editing enzyme that deacylates mischarged D-aminoacyl-tRNAs. Also deacylates mischarged glycyl-tRNA(Ala), protecting cells against glycine mischarging by AlaRS. Acts via tRNA-based rather than protein-based catalysis; rejects L-amino acids rather than detecting D-amino acids in the active site. By recycling D-aminoacyl-tRNA to D-amino acids and free tRNA molecules, this enzyme counteracts the toxicity associated with the formation of D-aminoacyl-tRNA entities in vivo and helps enforce protein L-homochirality. The polypeptide is D-aminoacyl-tRNA deacylase (Stenotrophomonas maltophilia (strain K279a)).